The following is a 2280-amino-acid chain: Protein Ycf2 (2280 aa).

Gly-1631–Ser-1638 is a binding site for ATP.

The protein belongs to the Ycf2 family.

The protein resides in the plastid. Its subcellular location is the chloroplast stroma. In terms of biological role, probable ATPase of unknown function. Its presence in a non-photosynthetic plant (Epifagus virginiana) and experiments in tobacco indicate that it has an essential function which is probably not related to photosynthesis. This is Protein Ycf2 from Nicotiana tomentosiformis (Tobacco).